The sequence spans 317 residues: Olfactory receptor 8B3 (317 aa).

At methionine 1–tyrosine 32 the chain is on the extracellular side. Asparagine 8 carries N-linked (GlcNAc...) asparagine glycosylation. The helical transmembrane segment at leucine 33–glycine 53 threads the bilayer. The Cytoplasmic portion of the chain corresponds to leucine 54–histidine 59. Residues threonine 60–phenylalanine 80 form a helical membrane-spanning segment. Residues serine 81–tyrosine 97 lie on the Extracellular side of the membrane. Residues alanine 98–leucine 118 form a helical membrane-spanning segment. Over threonine 119 to lysine 136 the chain is Cytoplasmic. Residues valine 137–alanine 157 traverse the membrane as a helical segment. Over glycine 158–glutamate 199 the chain is Extracellular. Residues valine 200–serine 220 traverse the membrane as a helical segment. Residues tyrosine 221–serine 242 are Cytoplasmic-facing. The helical transmembrane segment at threonine 243–leucine 263 threads the bilayer. Over lysine 264–lysine 274 the chain is Extracellular. A helical transmembrane segment spans residues isoleucine 275–leucine 294. Over arginine 295–asparagine 317 the chain is Cytoplasmic.

Belongs to the G-protein coupled receptor 1 family.

The protein resides in the cell membrane. Odorant receptor. The polypeptide is Olfactory receptor 8B3 (Mus musculus (Mouse)).